Here is a 347-residue protein sequence, read N- to C-terminus: Protein RecA (347 aa).

Residue 64-71 participates in ATP binding; it reads GPESSGKT.

The protein belongs to the RecA family.

The protein localises to the cytoplasm. Can catalyze the hydrolysis of ATP in the presence of single-stranded DNA, the ATP-dependent uptake of single-stranded DNA by duplex DNA, and the ATP-dependent hybridization of homologous single-stranded DNAs. It interacts with LexA causing its activation and leading to its autocatalytic cleavage. The chain is Protein RecA from Bacillus velezensis (strain DSM 23117 / BGSC 10A6 / LMG 26770 / FZB42) (Bacillus amyloliquefaciens subsp. plantarum).